The following is a 41-amino-acid chain: MKVRNSLKSLRGRHRANRLVRRKGRVYVINKVQRRFKARQG.

Belongs to the bacterial ribosomal protein bL36 family.

In Bradyrhizobium diazoefficiens (strain JCM 10833 / BCRC 13528 / IAM 13628 / NBRC 14792 / USDA 110), this protein is Large ribosomal subunit protein bL36.